A 229-amino-acid polypeptide reads, in one-letter code: Urease accessory protein UreF (229 aa).

It belongs to the UreF family. In terms of assembly, ureD, UreF and UreG form a complex that acts as a GTP-hydrolysis-dependent molecular chaperone, activating the urease apoprotein by helping to assemble the nickel containing metallocenter of UreC. The UreE protein probably delivers the nickel.

It is found in the cytoplasm. Required for maturation of urease via the functional incorporation of the urease nickel metallocenter. The chain is Urease accessory protein UreF from Staphylococcus aureus (strain JH1).